We begin with the raw amino-acid sequence, 379 residues long: Putative glutamate--cysteine ligase 2 (379 aa).

The protein belongs to the glutamate--cysteine ligase type 2 family. YbdK subfamily.

The catalysed reaction is L-cysteine + L-glutamate + ATP = gamma-L-glutamyl-L-cysteine + ADP + phosphate + H(+). In terms of biological role, ATP-dependent carboxylate-amine ligase which exhibits weak glutamate--cysteine ligase activity. The protein is Putative glutamate--cysteine ligase 2 of Mycobacterium avium (strain 104).